A 101-amino-acid chain; its full sequence is Small ribosomal subunit protein uS14 (101 aa).

A disordered region spans residues 1-22; that stretch reads MAKVSSIKKNESRKKKSQSLHN. The span at 11-22 shows a compositional bias: basic residues; that stretch reads ESRKKKSQSLHN.

This sequence belongs to the universal ribosomal protein uS14 family. As to quaternary structure, part of the 30S ribosomal subunit. Contacts proteins S3 and S10.

Binds 16S rRNA, required for the assembly of 30S particles and may also be responsible for determining the conformation of the 16S rRNA at the A site. The protein is Small ribosomal subunit protein uS14 of Rickettsia conorii (strain ATCC VR-613 / Malish 7).